The primary structure comprises 546 residues: CTP synthase (546 aa).

The interval 1 to 266 (MTTNYIFVTG…DDLVCARFGI (266 aa)) is amidoligase domain. Ser-14 is a CTP binding site. Position 14 (Ser-14) interacts with UTP. Residues 15–20 (SLGKGI) and Asp-72 each bind ATP. Asp-72 and Glu-140 together coordinate Mg(2+). CTP is bound by residues 147 to 149 (DIE), 187 to 192 (KTKPTQ), and Lys-223. UTP contacts are provided by residues 187 to 192 (KTKPTQ) and Lys-223. 239 to 241 (KDV) contacts ATP. Positions 291–542 (TIGMVGKYIE…VKAAGQNARG (252 aa)) constitute a Glutamine amidotransferase type-1 domain. L-glutamine is bound at residue Gly-352. Residue Cys-379 is the Nucleophile; for glutamine hydrolysis of the active site. Residues 380 to 383 (LGMQ), Glu-403, and Arg-470 each bind L-glutamine. Residues His-515 and Glu-517 contribute to the active site.

It belongs to the CTP synthase family. In terms of assembly, homotetramer.

The enzyme catalyses UTP + L-glutamine + ATP + H2O = CTP + L-glutamate + ADP + phosphate + 2 H(+). The catalysed reaction is L-glutamine + H2O = L-glutamate + NH4(+). It carries out the reaction UTP + NH4(+) + ATP = CTP + ADP + phosphate + 2 H(+). It functions in the pathway pyrimidine metabolism; CTP biosynthesis via de novo pathway; CTP from UDP: step 2/2. Its activity is regulated as follows. Allosterically activated by GTP, when glutamine is the substrate; GTP has no effect on the reaction when ammonia is the substrate. The allosteric effector GTP functions by stabilizing the protein conformation that binds the tetrahedral intermediate(s) formed during glutamine hydrolysis. Inhibited by the product CTP, via allosteric rather than competitive inhibition. Its function is as follows. Catalyzes the ATP-dependent amination of UTP to CTP with either L-glutamine or ammonia as the source of nitrogen. Regulates intracellular CTP levels through interactions with the four ribonucleotide triphosphates. The chain is CTP synthase from Vibrio campbellii (strain ATCC BAA-1116).